Consider the following 699-residue polypeptide: Endogenous retrovirus group K member 19 Env polyprotein (699 aa).

Residues 1–47 (MNPSEMQRKAPPRRRRHRNRAPLTHKMNKMVTSEEQMKLPSTKKAEP) form a disordered region. An N-terminal signal peptide occupies residues 1-89 (MNPSEMQRKA…ALMIVSMVVS (89 aa)). Residues 10–20 (APPRRRRHRNR) are compositionally biased toward basic residues. At 90 to 632 (LPMPAGAAAA…NLNPVTWVKT (543 aa)) the chain is on the extracellular side. N-linked (GlcNAc...) asparagine glycosylation is found at asparagine 100, asparagine 128, asparagine 153, asparagine 274, asparagine 355, asparagine 372, and asparagine 461. The segment at 466-486 (FIFTLIAVIMGLIAVTATAAV) is fusion peptide. Residues asparagine 507, asparagine 554, asparagine 566, and asparagine 585 are each glycosylated (N-linked (GlcNAc...) asparagine). Residues 633–653 (IGSTTIINLILILVCLFCLLL) form a helical membrane-spanning segment. Residues 654–699 (VCRCTQQLRRDSDHRERAMMTMAVLSKRKGGNVGKSKRDQIVTVSV) lie on the Cytoplasmic side of the membrane.

It belongs to the beta type-B retroviral envelope protein family. HERV class-II K(HML-2) env subfamily. In terms of assembly, the surface (SU) and transmembrane (TM) proteins form a heterodimer. SU and TM are attached by noncovalent interactions or by a labile interchain disulfide bond. Post-translationally, specific enzymatic cleavages in vivo yield the mature SU and TM proteins.

The protein localises to the cell membrane. It is found in the virion. In terms of biological role, retroviral envelope proteins mediate receptor recognition and membrane fusion during early infection. Endogenous envelope proteins may have kept, lost or modified their original function during evolution. This endogenous envelope protein has lost its original fusogenic properties. Functionally, SU mediates receptor recognition. TM anchors the envelope heterodimer to the viral membrane through one transmembrane domain. The other hydrophobic domain, called fusion peptide, mediates fusion of the viral membrane with the target cell membrane. The polypeptide is Endogenous retrovirus group K member 19 Env polyprotein (ERVK-19) (Homo sapiens (Human)).